Consider the following 243-residue polypeptide: UPF0758 protein SYNPCC7002_A0220 (243 aa).

An MPN domain is found at 112–235 (IIVDSPEAAA…FGSLRQKTAL (124 aa)). Positions 184, 186, and 197 each coordinate Zn(2+). A JAMM motif motif is present at residues 184–197 (HNHPSGNVDPSPED).

The protein belongs to the UPF0758 family.

In Picosynechococcus sp. (strain ATCC 27264 / PCC 7002 / PR-6) (Agmenellum quadruplicatum), this protein is UPF0758 protein SYNPCC7002_A0220.